The sequence spans 119 residues: 5-hydroxyisourate hydrolase (119 aa).

Substrate contacts are provided by His10, Arg48, and Tyr116.

It belongs to the transthyretin family. 5-hydroxyisourate hydrolase subfamily. Homotetramer.

It catalyses the reaction 5-hydroxyisourate + H2O = 5-hydroxy-2-oxo-4-ureido-2,5-dihydro-1H-imidazole-5-carboxylate + H(+). It functions in the pathway purine metabolism; urate degradation; (S)-allantoin from urate: step 2/3. Functionally, catalyzes the hydrolysis of 5-hydroxyisourate (HIU) to 2-oxo-4-hydroxy-4-carboxy-5-ureidoimidazoline (OHCU). This is 5-hydroxyisourate hydrolase from Deinococcus radiodurans (strain ATCC 13939 / DSM 20539 / JCM 16871 / CCUG 27074 / LMG 4051 / NBRC 15346 / NCIMB 9279 / VKM B-1422 / R1).